Consider the following 159-residue polypeptide: Ribosome maturation factor RimP (159 aa).

This sequence belongs to the RimP family.

The protein resides in the cytoplasm. Its function is as follows. Required for maturation of 30S ribosomal subunits. The protein is Ribosome maturation factor RimP of Streptococcus agalactiae serotype III (strain NEM316).